We begin with the raw amino-acid sequence, 743 residues long: tRNA(Met) cytidine acetyltransferase TmcA (743 aa).

ATP contacts are provided by residues glutamine 216, 241–250 (GRGKSASIGL), and arginine 390. The region spanning 420-604 (LKIEDVSQEE…YSVIVIRALS (185 aa)) is the N-acetyltransferase domain. Acetyl-CoA is bound by residues 531–533 (IAV) and 538–544 (QGKGIGS).

Belongs to the RNA cytidine acetyltransferase family. TmcA subfamily.

The protein localises to the cytoplasm. The enzyme catalyses cytidine(34) in elongator tRNA(Met) + acetyl-CoA + ATP + H2O = N(4)-acetylcytidine(34) in elongator tRNA(Met) + ADP + phosphate + CoA + H(+). In terms of biological role, catalyzes the formation of N(4)-acetylcytidine (ac(4)C) at the wobble position of tRNA(Met), by using acetyl-CoA as an acetyl donor and ATP (or GTP). The polypeptide is tRNA(Met) cytidine acetyltransferase TmcA (Saccharolobus islandicus (strain Y.G.57.14 / Yellowstone #1) (Sulfolobus islandicus)).